The primary structure comprises 785 residues: Putative lipase C4A8.10 (785 aa).

Disordered stretches follow at residues 29–99 (HSAT…SSDF) and 115–140 (NTNA…VGTS). A compositionally biased stretch (low complexity) spans 32-41 (TSSTTVPPTV). The span at 47-58 (TKKESGSIEDRA) shows a compositional bias: basic and acidic residues. A compositionally biased stretch (polar residues) spans 63 to 86 (MTISSGENISKQISENNSSTNPKH). 2 stretches are compositionally biased toward low complexity: residues 89-99 (SESSPLLSSDF) and 127-140 (GVSH…VGTS). Ser-390 functions as the Charge relay system in the catalytic mechanism.

This sequence belongs to the putative lipase ROG1 family.

This Schizosaccharomyces pombe (strain 972 / ATCC 24843) (Fission yeast) protein is Putative lipase C4A8.10.